Here is a 232-residue protein sequence, read N- to C-terminus: tRNA (guanine-N(1)-)-methyltransferase (232 aa).

Residues glycine 112 and 132 to 137 (IGDYVL) each bind S-adenosyl-L-methionine.

It belongs to the RNA methyltransferase TrmD family. As to quaternary structure, homodimer.

The protein resides in the cytoplasm. The catalysed reaction is guanosine(37) in tRNA + S-adenosyl-L-methionine = N(1)-methylguanosine(37) in tRNA + S-adenosyl-L-homocysteine + H(+). Specifically methylates guanosine-37 in various tRNAs. The protein is tRNA (guanine-N(1)-)-methyltransferase of Anaplasma phagocytophilum (strain HZ).